The sequence spans 103 residues: Small ribosomal subunit protein eS25 (103 aa).

The disordered stretch occupies residues 1–23 (MGGEDMAKKKAPSAKEGEKQQGF).

Belongs to the eukaryotic ribosomal protein eS25 family.

In Aeropyrum pernix (strain ATCC 700893 / DSM 11879 / JCM 9820 / NBRC 100138 / K1), this protein is Small ribosomal subunit protein eS25 (rps25e).